Consider the following 538-residue polypeptide: Bifunctional purine biosynthesis protein PurH (538 aa).

Positions Ile8–Thr158 constitute an MGS-like domain.

Belongs to the PurH family.

The catalysed reaction is (6R)-10-formyltetrahydrofolate + 5-amino-1-(5-phospho-beta-D-ribosyl)imidazole-4-carboxamide = 5-formamido-1-(5-phospho-D-ribosyl)imidazole-4-carboxamide + (6S)-5,6,7,8-tetrahydrofolate. It catalyses the reaction IMP + H2O = 5-formamido-1-(5-phospho-D-ribosyl)imidazole-4-carboxamide. The protein operates within purine metabolism; IMP biosynthesis via de novo pathway; 5-formamido-1-(5-phospho-D-ribosyl)imidazole-4-carboxamide from 5-amino-1-(5-phospho-D-ribosyl)imidazole-4-carboxamide (10-formyl THF route): step 1/1. Its pathway is purine metabolism; IMP biosynthesis via de novo pathway; IMP from 5-formamido-1-(5-phospho-D-ribosyl)imidazole-4-carboxamide: step 1/1. The protein is Bifunctional purine biosynthesis protein PurH of Rhizobium rhizogenes (strain K84 / ATCC BAA-868) (Agrobacterium radiobacter).